A 142-amino-acid polypeptide reads, in one-letter code: ATP synthase epsilon chain (142 aa).

It belongs to the ATPase epsilon chain family. As to quaternary structure, F-type ATPases have 2 components, CF(1) - the catalytic core - and CF(0) - the membrane proton channel. CF(1) has five subunits: alpha(3), beta(3), gamma(1), delta(1), epsilon(1). CF(0) has three main subunits: a, b and c.

It localises to the cell inner membrane. Produces ATP from ADP in the presence of a proton gradient across the membrane. This chain is ATP synthase epsilon chain, found in Pasteurella multocida (strain Pm70).